A 394-amino-acid chain; its full sequence is MSILQVSTSSLSSSTLLSISPRKSLSSTKSCRIVRCSVEGTTVTERKVSATSEPLLLRAVKGEVVDRPPVWLMRQAGRYMKSYQTLCEKYPSFRDRSENADLVVEISLQPWKVFKPDGVILFSDILTPLSGMNIPFDIVKGKGPIIFNPPQSAADVAQVREFVPEESVPYVGEALRRLRNEVNNEAAVLGFVGAPFTLSSYVIEGGSSKNFTQIKRLAFSQPKVLHALLQKFTTSMITYIRYQADSGAQAVQIFDSWATELSPVDFEEFSLPYLKQIVEAVKQTHPNLPLILYASGSGGLLERLARTGVDVVSLDWTVDMAEGRDRLGRDIAVQGNVDPGVLFGSKEFITSRIHDTVKKAGRDKHILNLGHGIKVGTPEENVAHFFEVAQEIRY.

Substrate is bound by residues 74 to 78 (RQAGR), phenylalanine 93, serine 123, aspartate 124, tyrosine 201, serine 256, and histidine 371.

This sequence belongs to the uroporphyrinogen decarboxylase family. In terms of assembly, homodimer.

The protein localises to the plastid. The protein resides in the chloroplast. It catalyses the reaction uroporphyrinogen III + 4 H(+) = coproporphyrinogen III + 4 CO2. It participates in porphyrin-containing compound metabolism; protoporphyrin-IX biosynthesis; coproporphyrinogen-III from 5-aminolevulinate: step 4/4. It functions in the pathway porphyrin-containing compound metabolism; chlorophyll biosynthesis. Functionally, catalyzes the decarboxylation of four acetate groups of uroporphyrinogen-III to yield coproporphyrinogen-III. The sequence is that of Uroporphyrinogen decarboxylase 2, chloroplastic (HEME2) from Arabidopsis thaliana (Mouse-ear cress).